The sequence spans 376 residues: Light-dependent chlorophyll f synthase (376 aa).

The tract at residues 1-22 (MKLESDHVIATSDSSDYTSEPT) is disordered. Over residues 11 to 22 (TSDSSDYTSEPT) the composition is skewed to polar residues. The next 5 helical transmembrane spans lie at 51–68 (YVGWFGVLMIPCVLTAAT), 140–155 (HFLIGIIAYQDREWEL), 164–178 (WISLAFTAPVAASVS), 219–240 (LHQLGVIGVLGGAFAAAMHGSL), and 298–312 (FLAALPVAGIWSAAL). His-140 provides a ligand contact to a chlorophyll. His-220 contacts a chlorophyll.

It belongs to the reaction center PufL/M/PsbA/D family. In terms of assembly, homodimer.

The protein resides in the cellular thylakoid membrane. Synthesizes chlorophyll f or chlorophyllide f (Chl f, 2-formyl chlorophyll a), probably by oxidation of chlorophyll a or chlorophyllide a and reduction of plastoquinone. The reaction is probably light-dependent. Chl f absorbs far red light (FRL, 707 nm in 100% methanol), and is synthesized when cells are grown in FRL, where it provides the advantage of extending the spectral range of harvested light in terrestrial cyanobacteria. When ectopically expressed in Synechococcus PCC 7002 (which does not grow in FRL and does not make Chl f) produces Chl f (0.059% of total chlorophyll). The polypeptide is Light-dependent chlorophyll f synthase (Chlorogloeopsis fritschii (strain PCC 9212)).